Here is an 839-residue protein sequence, read N- to C-terminus: Homeobox-leucine zipper protein HOX10 (839 aa).

2 disordered regions span residues 1 to 24 and 132 to 157; these read MAAA…SGMD and QNTP…RDAS. The homeobox DNA-binding region spans 24 to 87; the sequence is DSGKYVRYTP…NRRCRDKQRK (64 aa). Residues 91-134 are a coiled coil; the sequence is RLQAVNRKLTAMNKLLMEENERLQKQVSQLVHENAHMRQQLQNT. The START domain occupies 155-383; that stretch reads DASNPSGLLS…IAQETSGEVV (229 aa).

Belongs to the HD-ZIP homeobox family. Class III subfamily. In terms of tissue distribution, expressed in stems, leaf sheaths and blades and panicles.

Its subcellular location is the nucleus. Its function is as follows. Probable transcription factor. The polypeptide is Homeobox-leucine zipper protein HOX10 (HOX10) (Oryza sativa subsp. indica (Rice)).